Consider the following 308-residue polypeptide: Ornithine carbamoyltransferase (308 aa).

Carbamoyl phosphate contacts are provided by residues 56–59 (STRT), Gln-83, Arg-107, and 134–137 (HPCQ). L-ornithine contacts are provided by residues Asn-165, Asp-225, and 229 to 230 (SM). Residues 266–267 (CL) and Arg-294 each bind carbamoyl phosphate.

Belongs to the aspartate/ornithine carbamoyltransferase superfamily. OTCase family.

Its subcellular location is the cytoplasm. The catalysed reaction is carbamoyl phosphate + L-ornithine = L-citrulline + phosphate + H(+). Its pathway is amino-acid biosynthesis; L-arginine biosynthesis; L-arginine from L-ornithine and carbamoyl phosphate: step 1/3. In terms of biological role, reversibly catalyzes the transfer of the carbamoyl group from carbamoyl phosphate (CP) to the N(epsilon) atom of ornithine (ORN) to produce L-citrulline. The polypeptide is Ornithine carbamoyltransferase (Cereibacter sphaeroides (strain ATCC 17029 / ATH 2.4.9) (Rhodobacter sphaeroides)).